Reading from the N-terminus, the 326-residue chain is Aldo-keto reductase family 1 member D1 (326 aa).

NADP(+) is bound by residues 22–26 and D52; that span reads GLGTY. Position 26 (Y26) interacts with substrate. Substrate is bound by residues Y57, W88, E119, and Y131. Y57 (proton donor) is an active-site residue. NADP(+)-binding positions include 168–169, Q192, and 219–224; these read SN and YSPLGT. W230 is a binding site for substrate. 273-283 contacts NADP(+); that stretch reads KSTTPERIKEN.

Belongs to the aldo/keto reductase family. Post-translationally, the N-terminus is blocked.

The protein localises to the cytoplasm. It catalyses the reaction 5beta-cholestan-3-one + NADP(+) = cholest-4-en-3-one + NADPH + H(+). It carries out the reaction 4,5beta-dihydrocortisone + NADP(+) = cortisone + NADPH + H(+). The enzyme catalyses cortisol + NADPH + H(+) = 5beta-dihydrocortisol + NADP(+). The catalysed reaction is corticosterone + NADPH + H(+) = 5beta-dihydrocorticosterone + NADP(+). It catalyses the reaction 7alpha,12alpha-dihydroxycholest-4-en-3-one + NADPH + H(+) = 7alpha,12alpha-dihydroxy-5beta-cholestan-3-one + NADP(+). It carries out the reaction 7alpha-hydroxycholest-4-en-3-one + NADPH + H(+) = 7alpha-hydroxy-5beta-cholestan-3-one + NADP(+). The enzyme catalyses epitestosterone + NADPH + H(+) = 5beta-dihydroepitestosterone + NADP(+). The catalysed reaction is androst-4-ene-3,17-dione + NADPH + H(+) = 5beta-androstane-3,17-dione + NADP(+). It catalyses the reaction progesterone + NADPH + H(+) = 5beta-pregnan-3,20-dione + NADP(+). It carries out the reaction 21-hydroxyprogesterone + NADPH + H(+) = 5beta-dihydrodeoxycorticosterone + NADP(+). The enzyme catalyses aldosterone + NADPH + H(+) = 5beta-dihydroaldosterone + NADP(+). The catalysed reaction is 17beta-hydroxyandrosta-1,4-dien-3-one + NADPH + H(+) = 17beta-hydroxy-5beta-androst-1-en-3-one + NADP(+). It catalyses the reaction 17beta-hydroxyestr-4-en-3-one + NADPH + H(+) = 17beta-hydroxy-5beta-estran-3-one + NADP(+). It carries out the reaction 5beta-dihydrotestosterone + NADP(+) = testosterone + NADPH + H(+). The enzyme catalyses androst-4-ene-3,11,17-trione + NADPH + H(+) = 17beta-hydroxyandrost-4-ene-3,11-dione + NADP(+). Subject to inhibition by high substrate concentrations. Inhibited by testosterone concentrations above 10 uM. Inhibited by the primary and secondary bile acids chenodeoxycholic acid and ursodeoxycholic acid. In terms of biological role, catalyzes the stereospecific NADPH-dependent reduction of the C4-C5 double bond of bile acid intermediates and steroid hormones carrying a delta(4)-3-one structure to yield an A/B cis-ring junction. This cis-configuration is crucial for bile acid biosynthesis and plays important roles in steroid metabolism. Capable of reducing a broad range of delta-(4)-3-ketosteroids from C18 (such as, 17beta-hydroxyestr-4-en-3-one) to C27 (such as, 7alpha-hydroxycholest-4-en-3-one). This Rattus norvegicus (Rat) protein is Aldo-keto reductase family 1 member D1 (Akr1d1).